A 349-amino-acid chain; its full sequence is tRNA pseudouridine synthase D (349 aa).

A disordered region spans residues 1–22 (MTDAPLVTAELPGSGGSLRRSP). Asp78 serves as the catalytic Nucleophile. In terms of domain architecture, TRUD spans 150 to 304 (GLPNLFGPQR…AEGTRRAARL (155 aa)).

It belongs to the pseudouridine synthase TruD family.

The catalysed reaction is uridine(13) in tRNA = pseudouridine(13) in tRNA. In terms of biological role, responsible for synthesis of pseudouridine from uracil-13 in transfer RNAs. This Anaeromyxobacter sp. (strain Fw109-5) protein is tRNA pseudouridine synthase D.